The sequence spans 513 residues: ATP synthase subunit alpha (513 aa).

169–176 (GDRQTGKT) serves as a coordination point for ATP.

The protein belongs to the ATPase alpha/beta chains family. As to quaternary structure, F-type ATPases have 2 components, CF(1) - the catalytic core - and CF(0) - the membrane proton channel. CF(1) has five subunits: alpha(3), beta(3), gamma(1), delta(1), epsilon(1). CF(0) has three main subunits: a(1), b(2) and c(9-12). The alpha and beta chains form an alternating ring which encloses part of the gamma chain. CF(1) is attached to CF(0) by a central stalk formed by the gamma and epsilon chains, while a peripheral stalk is formed by the delta and b chains.

Its subcellular location is the cell inner membrane. The enzyme catalyses ATP + H2O + 4 H(+)(in) = ADP + phosphate + 5 H(+)(out). In terms of biological role, produces ATP from ADP in the presence of a proton gradient across the membrane. The alpha chain is a regulatory subunit. This chain is ATP synthase subunit alpha, found in Shigella boydii serotype 18 (strain CDC 3083-94 / BS512).